The following is a 507-amino-acid chain: Maturase K (507 aa).

The protein belongs to the intron maturase 2 family. MatK subfamily.

The protein resides in the plastid. Its subcellular location is the chloroplast. In terms of biological role, usually encoded in the trnK tRNA gene intron. Probably assists in splicing its own and other chloroplast group II introns. The polypeptide is Maturase K (Magnolia figo (Banana shrub)).